A 367-amino-acid polypeptide reads, in one-letter code: Probable alcohol dehydrogenase adh (367 aa).

Cysteine 43, histidine 64, cysteine 97, cysteine 100, cysteine 103, cysteine 111, and asparagine 163 together coordinate Zn(2+).

It belongs to the zinc-containing alcohol dehydrogenase family. It depends on Zn(2+) as a cofactor.

It carries out the reaction a primary alcohol + NAD(+) = an aldehyde + NADH + H(+). The catalysed reaction is a secondary alcohol + NAD(+) = a ketone + NADH + H(+). In Mycobacterium tuberculosis (strain CDC 1551 / Oshkosh), this protein is Probable alcohol dehydrogenase adh (adh).